The chain runs to 262 residues: Acyl-coenzyme A diphosphatase FITM2 (262 aa).

The Cytoplasmic portion of the chain corresponds to 1-23 (MEHLERCAWVLRGTLVRAAVRRY). The helical transmembrane segment at 24-44 (LPWALAASMLAGSLLKELSPL) threads the bilayer. At 45 to 57 (PESYLSNKRNVLN) the chain is on the lumenal side. The chain crosses the membrane as a helical span at residues 58–78 (VYFVKVAWAWTFCLLLPFIAL). Residues 79 to 93 (TNYHLTGKAGLVLRR) lie on the Cytoplasmic side of the membrane. The helical transmembrane segment at 94–114 (LSTLLVGTAIWYVCTAIFSNV) threads the bilayer. Over 115-145 (EHYTGSCYQSPALEGVRNEPLSKQQCHGQGG) the chain is Lumenal. The chain crosses the membrane as a helical span at residues 146–166 (FWHGFDISGHSFLLTFCALMI). The active site involves His155. Topologically, residues 167 to 185 (VEEMAVLHEVKTDRSHCLH) are cytoplasmic. Residues 186–206 (VAITALVVALGFLTFIWVWMF) traverse the membrane as a helical segment. Topologically, residues 207–218 (LCTAVYFHNLSQ) are lumenal. His214 is an active-site residue. A helical transmembrane segment spans residues 219–239 (KVFGTLFGLLGWYGTYGFWYL). At 240–262 (KSFSPGLPPQSCSSNLKQDSYKR) the chain is on the cytoplasmic side.

The protein belongs to the FIT family. FIT2 subfamily.

It localises to the endoplasmic reticulum membrane. It catalyses the reaction an acyl-CoA + H2O = an acyl-4'-phosphopantetheine + adenosine 3',5'-bisphosphate + 2 H(+). The enzyme catalyses (9Z)-octadecenoyl-CoA + H2O = S-(9Z-octadecenoyl)-4'-phosphopantetheine + adenosine 3',5'-bisphosphate + 2 H(+). The catalysed reaction is (5Z,8Z,11Z,14Z)-eicosatetraenoyl-CoA + H2O = S-(5Z,8Z,11Z,14Z-eicosatetraenoyl)-4'-phosphopantetheine + adenosine 3',5'-bisphosphate + 2 H(+). It carries out the reaction hexadecanoyl-CoA + H2O = S-hexadecanoyl-4'-phosphopantetheine + adenosine 3',5'-bisphosphate + 2 H(+). Its function is as follows. Fatty acyl-coenzyme A (CoA) diphosphatase that hydrolyzes fatty acyl-CoA to yield acyl-4'-phosphopantetheine and adenosine 3',5'-bisphosphate. Preferentially hydrolyzes unsaturated long-chain acyl-CoA substrates such as oleoyl-CoA/(9Z)-octadecenoyl-CoA and arachidonoyl-CoA/(5Z,8Z,11Z,14Z)-eicosatetraenoyl-CoA in the endoplasmic reticulum (ER) lumen. This catalytic activity is required for maintaining ER structure and for lipid droplets (LDs) biogenesis, which are lipid storage organelles involved in maintaining lipid and energy homeostasis. Directly binds to diacylglycerol (DAGs) and triacylglycerol, which is also important for LD biogenesis. May support directional budding of nacent LDs from the ER into the cytosol by reducing DAG levels at sites of LD formation. Plays a role in the regulation of cell morphology and cytoskeletal organization. This chain is Acyl-coenzyme A diphosphatase FITM2, found in Sus scrofa (Pig).